The chain runs to 374 residues: Flap endonuclease 1 (374 aa).

Residues 1–105 (MGVKGLNQLI…GELEKRMIRK (105 aa)) are N-domain. Asp34 serves as a coordination point for Mg(2+). DNA-binding residues include Arg47 and Arg71. Asp87, Glu159, Glu161, Asp180, and Asp182 together coordinate Mg(2+). The interval 123–254 (EMVRYEKRSV…VTAFKLIKEH (132 aa)) is I-domain. Residue Glu159 coordinates DNA. The DNA site is built by Gly232 and Asp234. Residue Asp234 participates in Mg(2+) binding. Positions 341–349 (VQGRLDGFF) are interaction with PCNA. A compositionally biased stretch (basic and acidic residues) spans 354-365 (TEKRKPEQDKKT). A disordered region spans residues 354 to 374 (TEKRKPEQDKKTKGSKKAKKK).

This sequence belongs to the XPG/RAD2 endonuclease family. FEN1 subfamily. In terms of assembly, interacts with PCNA. Three molecules of FEN1 bind to one PCNA trimer with each molecule binding to one PCNA monomer. PCNA stimulates the nuclease activity without altering cleavage specificity. Mg(2+) is required as a cofactor. Phosphorylated. Phosphorylation upon DNA damage induces relocalization to the nuclear plasma.

The protein localises to the nucleus. It is found in the nucleolus. The protein resides in the nucleoplasm. It localises to the mitochondrion. Structure-specific nuclease with 5'-flap endonuclease and 5'-3' exonuclease activities involved in DNA replication and repair. During DNA replication, cleaves the 5'-overhanging flap structure that is generated by displacement synthesis when DNA polymerase encounters the 5'-end of a downstream Okazaki fragment. It enters the flap from the 5'-end and then tracks to cleave the flap base, leaving a nick for ligation. Also involved in the long patch base excision repair (LP-BER) pathway, by cleaving within the apurinic/apyrimidinic (AP) site-terminated flap. Acts as a genome stabilization factor that prevents flaps from equilibrating into structures that lead to duplications and deletions. Also possesses 5'-3' exonuclease activity on nicked or gapped double-stranded DNA, and exhibits RNase H activity. Also involved in replication and repair of rDNA and in repairing mitochondrial DNA. The protein is Flap endonuclease 1 of Meyerozyma guilliermondii (strain ATCC 6260 / CBS 566 / DSM 6381 / JCM 1539 / NBRC 10279 / NRRL Y-324) (Yeast).